Consider the following 272-residue polypeptide: 3-deoxy-manno-octulosonate cytidylyltransferase (272 aa).

This sequence belongs to the KdsB family.

It is found in the cytoplasm. It catalyses the reaction 3-deoxy-alpha-D-manno-oct-2-ulosonate + CTP = CMP-3-deoxy-beta-D-manno-octulosonate + diphosphate. Its pathway is nucleotide-sugar biosynthesis; CMP-3-deoxy-D-manno-octulosonate biosynthesis; CMP-3-deoxy-D-manno-octulosonate from 3-deoxy-D-manno-octulosonate and CTP: step 1/1. It participates in bacterial outer membrane biogenesis; lipopolysaccharide biosynthesis. Its function is as follows. Activates KDO (a required 8-carbon sugar) for incorporation into bacterial lipopolysaccharide in Gram-negative bacteria. The chain is 3-deoxy-manno-octulosonate cytidylyltransferase from Verminephrobacter eiseniae (strain EF01-2).